A 276-amino-acid chain; its full sequence is Large ribosomal subunit protein uL2 (276 aa).

Residues Ala224–Gly276 form a disordered region. Positions Lys254–Lys270 are enriched in basic residues.

Belongs to the universal ribosomal protein uL2 family. As to quaternary structure, part of the 50S ribosomal subunit. Forms a bridge to the 30S subunit in the 70S ribosome.

One of the primary rRNA binding proteins. Required for association of the 30S and 50S subunits to form the 70S ribosome, for tRNA binding and peptide bond formation. It has been suggested to have peptidyltransferase activity; this is somewhat controversial. Makes several contacts with the 16S rRNA in the 70S ribosome. This is Large ribosomal subunit protein uL2 from Ehrlichia ruminantium (strain Gardel).